The following is a 177-amino-acid chain: MKVYIHPAEQHTQRTSYLLCNLSLNEALLIDAGHVSTHLIHTIEKNSCTLTAVFLTRTDDATQAGVRTLLRVYSPHIFCGEKCWNAHESTLLQGDCSLNCAGFTVTCFASPAYGCYLYRIAHLAFTGDLCSAGYEEAGNEADTILERACTAHETLILFHGHGPPSSYTRARTQRASH.

This is an uncharacterized protein from Treponema pallidum (strain Nichols).